Here is a 216-residue protein sequence, read N- to C-terminus: uncharacterized protein (216 aa).

4 helical membrane-spanning segments follow: residues 5–27 (ISLILVIIFPYISLGLSARIAFS), 98–120 (FLSFFFPSVYVLSIIWIAGVFLL), 125–147 (VLIWSGIFNSLLLLFLGILTFTN), and 185–207 (GTLFVAILSFLFGILVLFTGILG).

Its subcellular location is the cell membrane. This is an uncharacterized protein from Aquifex aeolicus (strain VF5).